We begin with the raw amino-acid sequence, 132 residues long: Large ribosomal subunit protein uL14 (132 aa).

Belongs to the universal ribosomal protein uL14 family. In terms of assembly, part of the 50S ribosomal subunit. Forms a cluster with proteins L3 and L24e, part of which may contact the 16S rRNA in 2 intersubunit bridges.

Functionally, binds to 23S rRNA. Forms part of two intersubunit bridges in the 70S ribosome. The chain is Large ribosomal subunit protein uL14 from Methanococcus aeolicus (strain ATCC BAA-1280 / DSM 17508 / OCM 812 / Nankai-3).